Reading from the N-terminus, the 397-residue chain is Acetate kinase (397 aa).

Position 8 (N8) interacts with Mg(2+). Residue K15 coordinates ATP. R89 contributes to the substrate binding site. D146 (proton donor/acceptor) is an active-site residue. ATP is bound by residues 206–210 (HLGNG), 281–283 (DLR), and 329–333 (GIGEN). E382 serves as a coordination point for Mg(2+).

It belongs to the acetokinase family. In terms of assembly, homodimer. Mg(2+) is required as a cofactor. The cofactor is Mn(2+).

The protein resides in the cytoplasm. The enzyme catalyses acetate + ATP = acetyl phosphate + ADP. Its pathway is metabolic intermediate biosynthesis; acetyl-CoA biosynthesis; acetyl-CoA from acetate: step 1/2. Functionally, catalyzes the formation of acetyl phosphate from acetate and ATP. Can also catalyze the reverse reaction. This chain is Acetate kinase, found in Anoxybacillus flavithermus (strain DSM 21510 / WK1).